A 504-amino-acid polypeptide reads, in one-letter code: TGF-beta-activated kinase 1 and MAP3K7-binding protein 1 (504 aa).

The segment at methionine 1 to proline 22 is disordered. Phosphoserine is present on serine 7. The span at serine 7–tryptophan 17 shows a compositional bias: polar residues. In terms of domain architecture, PPM-type phosphatase spans glycine 28–phenylalanine 365. Serine 378 carries the post-translational modification Phosphoserine. Serine 395 carries an O-linked (GlcNAc) serine glycan. Serine 423 is subject to Phosphoserine; by MAPK14. Polar residues predominate over residues alanine 430–proline 439. The disordered stretch occupies residues alanine 430–valine 478. At threonine 431 the chain carries Phosphothreonine; by MAPK14. Serine 438 is modified (phosphoserine; by MAPK14). Positions threonine 440–serine 457 are enriched in low complexity. At threonine 442 the chain carries Phosphothreonine.

Interacts with XIAP and BIRC7. Interacts with TRAF6 and MAP3K7; during IL-1 signaling. Identified in the TRIKA2 complex composed of MAP3K7, TAB1 and TAB2. Interacts with TRAF6 and MAPK14; these interactions allow MAPK14 autophosphorylation. Interacts with STING1; interaction takes place following cGAMP activation and promotes TAB1 recruitment to the endoplasmic reticulum, triggering MAP3K7/TAK1 activation and STING1 phosphorylation. Phosphorylated at all three sites Ser-423, Thr-431 and Ser-438 by MAPK14 when cells were exposed to cellular stresses, or stimulated with TNF-alpha, IL1 or LPS. These phosphorylations inhibit TAK1 activation by a feedback control mechanism. Dephosphorylated by DUSP14 at Ser-438, leading to TAB1-MAP3K7/TAK1 complex inactivation in T-cells. Post-translationally, ubiquitinated by MAP3K1 with 'Lys-63'-linked polyubiquitin; leading to activation of TAK1 and of JNK and p38 MAP kinases following EGF and TGF-beta stimulation. Ubiquitinated by ITCH with 'Lys-48'-linked polyubiquitin; leading to proteasomal degradation. Ubiquitinated by RNF114 during maternal-to-zygotic transition; leading to degradation. In terms of processing, (Microbial infection) Deubiquitinated by Y.enterocolitica YopP. O-GlcNAcylated at Ser-395 by OGT is required for full MAP3K7/TAK1 activation upon stimulation with IL-1 or osmotic stress. Deglycosylated at Ser-395 by OGA. As to expression, ubiquitous.

The protein resides in the cytoplasm. It localises to the cytosol. It is found in the endoplasmic reticulum membrane. Key adapter protein that plays an essential role in JNK and NF-kappa-B activation and proinflammatory cytokines production in response to stimulation with TLRs and cytokines. Mechanistically, associates with the catalytic domain of MAP3K7/TAK1 to trigger MAP3K7/TAK1 autophosphorylation leading to its full activation. Similarly, associates with MAPK14 and triggers its autophosphorylation and subsequent activation. In turn, MAPK14 phosphorylates TAB1 and inhibits MAP3K7/TAK1 activation in a feedback control mechanism. Also plays a role in recruiting MAPK14 to the TAK1 complex for the phosphorylation of the TAB2 and TAB3 regulatory subunits. The polypeptide is TGF-beta-activated kinase 1 and MAP3K7-binding protein 1 (TAB1) (Homo sapiens (Human)).